The primary structure comprises 212 residues: ATP-dependent Clp protease proteolytic subunit (212 aa).

The active-site Nucleophile is the Ser-107. The active site involves His-132.

This sequence belongs to the peptidase S14 family. Fourteen ClpP subunits assemble into 2 heptameric rings which stack back to back to give a disk-like structure with a central cavity, resembling the structure of eukaryotic proteasomes.

The protein resides in the cytoplasm. It catalyses the reaction Hydrolysis of proteins to small peptides in the presence of ATP and magnesium. alpha-casein is the usual test substrate. In the absence of ATP, only oligopeptides shorter than five residues are hydrolyzed (such as succinyl-Leu-Tyr-|-NHMec, and Leu-Tyr-Leu-|-Tyr-Trp, in which cleavage of the -Tyr-|-Leu- and -Tyr-|-Trp bonds also occurs).. Functionally, cleaves peptides in various proteins in a process that requires ATP hydrolysis. Has a chymotrypsin-like activity. Plays a major role in the degradation of misfolded proteins. This is ATP-dependent Clp protease proteolytic subunit from Pseudoalteromonas atlantica (strain T6c / ATCC BAA-1087).